A 428-amino-acid chain; its full sequence is Glutamate-1-semialdehyde 2,1-aminomutase 1 (428 aa).

At Lys267 the chain carries N6-(pyridoxal phosphate)lysine.

It belongs to the class-III pyridoxal-phosphate-dependent aminotransferase family. HemL subfamily. In terms of assembly, homodimer. Requires pyridoxal 5'-phosphate as cofactor.

The protein resides in the cytoplasm. The enzyme catalyses (S)-4-amino-5-oxopentanoate = 5-aminolevulinate. It functions in the pathway porphyrin-containing compound metabolism; protoporphyrin-IX biosynthesis; 5-aminolevulinate from L-glutamyl-tRNA(Glu): step 2/2. The polypeptide is Glutamate-1-semialdehyde 2,1-aminomutase 1 (Staphylococcus aureus (strain MW2)).